The following is an 89-amino-acid chain: Putative membrane protein insertion efficiency factor (89 aa).

The interval 68–89 (VPPPNSDARNAPHEAEASSHRL) is disordered. A compositionally biased stretch (basic and acidic residues) spans 77 to 89 (NAPHEAEASSHRL).

The protein belongs to the UPF0161 family.

The protein resides in the cell inner membrane. In terms of biological role, could be involved in insertion of integral membrane proteins into the membrane. The protein is Putative membrane protein insertion efficiency factor of Burkholderia mallei (strain SAVP1).